The chain runs to 258 residues: Immediate-early protein IE-0 (258 aa).

The RING-type zinc finger occupies 191-237 (CNICEDSSAEEQFLKPNVCCGYRVCNACYAKLWEFCTGAYPVCPICK).

This chain is Immediate-early protein IE-0 (IE-0), found in Lymantria dispar multicapsid nuclear polyhedrosis virus (LdMNPV).